Consider the following 1020-residue polypeptide: 26S proteasome non-ATPase regulatory subunit 1 (1020 aa).

The segment at 279–322 is disordered; sequence TALPSTFKPQGTTSEDGAKSEGDKSKSDEDITEETPADDKVERT. Residues 281–293 show a composition bias toward polar residues; that stretch reads LPSTFKPQGTTSE. At Thr-291 the chain carries Phosphothreonine. Basic and acidic residues predominate over residues 294–307; it reads DGAKSEGDKSKSDE. 3 positions are modified to phosphoserine: Ser-298, Ser-303, and Ser-305. Thr-310 is subject to Phosphothreonine. PC repeat units follow at residues 418–452, 456–489, 491–525, 526–560, 562–595, 596–631, 632–664, 666–701, 702–742, and 745–777; these read TATA…SSGY, GALY…ENVR, GGCL…VTGE, AAGI…EKIL, GLAV…VLRR, SGMY…DVRR, AAVT…PHVR, GAAM…FVRQ, GALI…DVMA, and GAIL…QAVV. Disordered stretches follow at residues 855–950 and 999–1020; these read QKRR…NPAR and FGPM…YIED. Basic and acidic residues-rich tracts occupy residues 858–867 and 876–939; these read RENADKKEDE and KEGA…KEPE. Positions 1003 to 1020 are enriched in acidic residues; that stretch reads NDEEKEPEPPEPFEYIED.

It belongs to the proteasome subunit S1 family.

In terms of biological role, acts as a regulatory subunit of the 26S proteasome which is involved in the ATP-dependent degradation of ubiquitinated proteins. The protein is 26S proteasome non-ATPase regulatory subunit 1 (Rpn2) of Drosophila melanogaster (Fruit fly).